Consider the following 256-residue polypeptide: Acetylglutamate kinase (256 aa).

Substrate is bound by residues glycine 40–glycine 41, arginine 62, and asparagine 154.

Belongs to the acetylglutamate kinase family. ArgB subfamily.

It localises to the cytoplasm. The enzyme catalyses N-acetyl-L-glutamate + ATP = N-acetyl-L-glutamyl 5-phosphate + ADP. It functions in the pathway amino-acid biosynthesis; L-arginine biosynthesis; N(2)-acetyl-L-ornithine from L-glutamate: step 2/4. In terms of biological role, catalyzes the ATP-dependent phosphorylation of N-acetyl-L-glutamate. The chain is Acetylglutamate kinase from Staphylococcus aureus (strain MRSA252).